We begin with the raw amino-acid sequence, 341 residues long: Heat-inducible transcription repressor HrcA (341 aa).

It belongs to the HrcA family.

Functionally, negative regulator of class I heat shock genes (grpE-dnaK-dnaJ and groELS operons). Prevents heat-shock induction of these operons. This Corynebacterium jeikeium (strain K411) protein is Heat-inducible transcription repressor HrcA.